The following is a 164-amino-acid chain: Thioredoxin domain-containing protein R443 (164 aa).

Residues 8–28 (HIVLIVLAIILILWIISLLLC) form a helical membrane-spanning segment. A Thioredoxin domain is found at 36–163 (YQVPIIQPMQ…LTQFIRSNMN (128 aa)). Cysteine 84 and cysteine 87 are oxidised to a cystine.

This sequence belongs to the thioredoxin family.

The protein resides in the host membrane. Its subcellular location is the virion. This Acanthamoeba polyphaga mimivirus (APMV) protein is Thioredoxin domain-containing protein R443.